A 62-amino-acid chain; its full sequence is Large ribosomal subunit protein bL28 (62 aa).

This sequence belongs to the bacterial ribosomal protein bL28 family.

The polypeptide is Large ribosomal subunit protein bL28 (Halalkalibacterium halodurans (strain ATCC BAA-125 / DSM 18197 / FERM 7344 / JCM 9153 / C-125) (Bacillus halodurans)).